The following is a 527-amino-acid chain: Catalase (527 aa).

An N-acetylalanine modification is found at A2. S9 is subject to Phosphoserine. K13 is modified (N6-succinyllysine). Catalysis depends on residues H75 and N148. NADP(+) contacts are provided by H194, S201, R203, and N213. An N6-succinyllysine modification is found at K221. At K233 the chain carries N6-acetyllysine. Residues K237, W303, H305, and K306 each contribute to the NADP(+) site. K306 carries the post-translational modification N6-acetyllysine; alternate. At K306 the chain carries N6-succinyllysine; alternate. Y358 lines the heme pocket. Phosphoserine is present on residues S417 and S422. K480 is modified (N6-acetyllysine; alternate). K480 bears the N6-succinyllysine; alternate mark. At K499 the chain carries N6-acetyllysine. Residue T511 is modified to Phosphothreonine. 2 positions are modified to phosphoserine: S515 and S517. A Microbody targeting signal; atypical motif is present at residues 524–527 (KANL).

It belongs to the catalase family. Homotetramer. Interacts (via microbody targeting signal) with PEX5, monomeric form interacts with PEX5, leading to its translocation into peroxisomes. It depends on heme as a cofactor. The cofactor is NADP(+).

The protein localises to the peroxisome matrix. The enzyme catalyses 2 H2O2 = O2 + 2 H2O. Catalyzes the degradation of hydrogen peroxide (H(2)O(2)) generated by peroxisomal oxidases to water and oxygen, thereby protecting cells from the toxic effects of hydrogen peroxide. Promotes growth of cells including T-cells, B-cells, myeloid leukemia cells, melanoma cells, mastocytoma cells and normal and transformed fibroblast cells. The polypeptide is Catalase (CAT) (Pongo abelii (Sumatran orangutan)).